Consider the following 461-residue polypeptide: Cyclic 2,3-diphosphoglycerate synthetase (461 aa).

This sequence belongs to the cyclic 2,3-diphosphoglycerate synthetase family.

It localises to the cytoplasm. The enzyme catalyses (2R)-2,3-bisphosphoglycerate + ATP + H(+) = cyclic (2R)-2,3-bisphosphoglycerate + ADP + phosphate. Its function is as follows. Catalyzes the formation of cyclic 2,3-diphosphoglycerate (cDPG) by formation of an intramolecular phosphoanhydride bond at the expense of ATP. The protein is Cyclic 2,3-diphosphoglycerate synthetase of Methanosphaera stadtmanae (strain ATCC 43021 / DSM 3091 / JCM 11832 / MCB-3).